Reading from the N-terminus, the 238-residue chain is UPF0758 protein Dtpsy_2777 (238 aa).

Residues 116-238 (VFDSPQAVQH…ALSMAEQGLV (123 aa)) form the MPN domain. Zn(2+) contacts are provided by histidine 187, histidine 189, and aspartate 200. Positions 187 to 200 (HNHPSGSVQPSRAD) match the JAMM motif motif.

The protein belongs to the UPF0758 family.

This Acidovorax ebreus (strain TPSY) (Diaphorobacter sp. (strain TPSY)) protein is UPF0758 protein Dtpsy_2777.